The following is a 261-amino-acid chain: Cytochrome c oxidase subunit 3 (261 aa).

6 helical membrane-spanning segments follow: residues 31 to 51, 82 to 102, 126 to 146, 159 to 179, 197 to 217, and 239 to 259; these read LVLW…LLLI, PMIL…WAFF, PFLV…TITW, AIQA…LQAW, FFVA…FLLV, and AWYW…IYWW.

It belongs to the cytochrome c oxidase subunit 3 family. In terms of assembly, component of the cytochrome c oxidase (complex IV, CIV), a multisubunit enzyme composed of a catalytic core of 3 subunits and several supernumerary subunits. The complex exists as a monomer or a dimer and forms supercomplexes (SCs) in the inner mitochondrial membrane with ubiquinol-cytochrome c oxidoreductase (cytochrome b-c1 complex, complex III, CIII).

The protein localises to the mitochondrion inner membrane. It catalyses the reaction 4 Fe(II)-[cytochrome c] + O2 + 8 H(+)(in) = 4 Fe(III)-[cytochrome c] + 2 H2O + 4 H(+)(out). Its function is as follows. Component of the cytochrome c oxidase, the last enzyme in the mitochondrial electron transport chain which drives oxidative phosphorylation. The respiratory chain contains 3 multisubunit complexes succinate dehydrogenase (complex II, CII), ubiquinol-cytochrome c oxidoreductase (cytochrome b-c1 complex, complex III, CIII) and cytochrome c oxidase (complex IV, CIV), that cooperate to transfer electrons derived from NADH and succinate to molecular oxygen, creating an electrochemical gradient over the inner membrane that drives transmembrane transport and the ATP synthase. Cytochrome c oxidase is the component of the respiratory chain that catalyzes the reduction of oxygen to water. Electrons originating from reduced cytochrome c in the intermembrane space (IMS) are transferred via the dinuclear copper A center (CU(A)) of subunit 2 and heme A of subunit 1 to the active site in subunit 1, a binuclear center (BNC) formed by heme A3 and copper B (CU(B)). The BNC reduces molecular oxygen to 2 water molecules using 4 electrons from cytochrome c in the IMS and 4 protons from the mitochondrial matrix. This chain is Cytochrome c oxidase subunit 3 (COIII), found in Paracentrotus lividus (Common sea urchin).